We begin with the raw amino-acid sequence, 579 residues long: Potassium-transporting ATPase potassium-binding subunit (579 aa).

10 helical membrane-spanning segments follow: residues 2–22 (MNLVLQYGLYILILVVLAIPL), 66–86 (SFSVLAFSIISLIVLFLLHIF), 135–155 (GLTVQNFVSAAVGISVLFALI), 177–197 (VLYILIPLSIVVSLALVSQGV), 260–280 (TILSNLFEMISLLLIPVALCF), 292–312 (GIAIFVAMGIMLVVAMAIVGV), 391–411 (VFGGVGCGLYGMIGFAILAVF), 437–457 (VLVCLATPIAILIGSGIASIL), 490–510 (FAGFAANTPFINISIGLSMIF), and 546–566 (FIGLLIFVVLLIGALSFFPAL).

The protein belongs to the KdpA family. In terms of assembly, the system is composed of three essential subunits: KdpA, KdpB and KdpC.

It is found in the cell membrane. Its function is as follows. Part of the high-affinity ATP-driven potassium transport (or Kdp) system, which catalyzes the hydrolysis of ATP coupled with the electrogenic transport of potassium into the cytoplasm. This subunit binds the extracellular potassium ions and delivers the ions to the membrane domain of KdpB through an intramembrane tunnel. In Clostridium botulinum (strain Eklund 17B / Type B), this protein is Potassium-transporting ATPase potassium-binding subunit.